The primary structure comprises 117 residues: Large ribosomal subunit protein uL18 (117 aa).

This sequence belongs to the universal ribosomal protein uL18 family. In terms of assembly, part of the 50S ribosomal subunit; part of the 5S rRNA/L5/L18/L25 subcomplex. Contacts the 5S and 23S rRNAs.

Functionally, this is one of the proteins that bind and probably mediate the attachment of the 5S RNA into the large ribosomal subunit, where it forms part of the central protuberance. This Yersinia enterocolitica serotype O:8 / biotype 1B (strain NCTC 13174 / 8081) protein is Large ribosomal subunit protein uL18.